We begin with the raw amino-acid sequence, 551 residues long: Formate--tetrahydrofolate ligase (551 aa).

61–68 (TPAGEGKS) contacts ATP.

It belongs to the formate--tetrahydrofolate ligase family.

The catalysed reaction is (6S)-5,6,7,8-tetrahydrofolate + formate + ATP = (6R)-10-formyltetrahydrofolate + ADP + phosphate. It participates in one-carbon metabolism; tetrahydrofolate interconversion. This is Formate--tetrahydrofolate ligase from Lactiplantibacillus plantarum (strain ATCC BAA-793 / NCIMB 8826 / WCFS1) (Lactobacillus plantarum).